A 78-amino-acid chain; its full sequence is UPF0349 protein BLi03401/BL03152 (78 aa).

It belongs to the UPF0349 family.

In Bacillus licheniformis (strain ATCC 14580 / DSM 13 / JCM 2505 / CCUG 7422 / NBRC 12200 / NCIMB 9375 / NCTC 10341 / NRRL NRS-1264 / Gibson 46), this protein is UPF0349 protein BLi03401/BL03152.